Reading from the N-terminus, the 229-residue chain is Putative ABC transporter permease protein ORF1 (229 aa).

Residues 23–214 form the ABC transmembrane type-1 domain; that stretch reads ALNSLLVALA…LPSLAFFALV (192 aa). A run of 5 helical transmembrane segments spans residues 27–47, 62–82, 91–111, 150–170, and 194–214; these read LLVA…MAYV, WVVV…FLVL, LTGL…WMLA, ATAL…LVLL, and SPAG…FALV.

Belongs to the binding-protein-dependent transport system permease family. MalFG subfamily.

The protein localises to the cell membrane. May participate in oleandomycin secretion during antibiotic production. This is Putative ABC transporter permease protein ORF1 from Streptomyces antibioticus.